The primary structure comprises 395 residues: MKRFLLCSFALVLLYPAGIDMYLVGLPRIAADLNASEAQLHIAFSVYLAGMATAMLFAGKIADQSGRKPVAIVGALVFMMASLLCSRASEGSLFLSGRFLQGVGAGGCYVVAFAILRDTLDEHRRAKVLSLLNGITCIVPVLAPVVGHLIMLRFPWQSLFYTMSAMGIIVGLLSLFILRETRPVRLAPRDLSRSSPAAESLINRFFVSRLAITTLSVSVILTFVNASPVLLMEVMGFSRGDYAITMALTAGVSMVVSFSTPFALGLFKPRTLMLVSQGLFLTAGVTLSLAHTNTVTLFGLTLICAGFSVGFGVAMSQALGPFSLRAGVASSTLGIAQVCGSSLWIWLAAILGISAMNMLIGILIGCSIVSILLIFSVTPNRSVAEHEEIPYQSRP.

Topologically, residues 1 to 3 (MKR) are cytoplasmic. The chain crosses the membrane as a helical span at residues 4–24 (FLLCSFALVLLYPAGIDMYLV). Residues 25 to 41 (GLPRIAADLNASEAQLH) are Periplasmic-facing. A helical transmembrane segment spans residues 42–62 (IAFSVYLAGMATAMLFAGKIA). The Cytoplasmic segment spans residues 63 to 68 (DQSGRK). The helical transmembrane segment at 69–89 (PVAIVGALVFMMASLLCSRAS) threads the bilayer. The Periplasmic segment spans residues 90–92 (EGS). A helical transmembrane segment spans residues 93 to 113 (LFLSGRFLQGVGAGGCYVVAF). Over 114–130 (AILRDTLDEHRRAKVLS) the chain is Cytoplasmic. Residues 131–151 (LLNGITCIVPVLAPVVGHLIM) traverse the membrane as a helical segment. Residues 152-157 (LRFPWQ) lie on the Periplasmic side of the membrane. The helical transmembrane segment at 158 to 178 (SLFYTMSAMGIIVGLLSLFIL) threads the bilayer. At 179–216 (RETRPVRLAPRDLSRSSPAAESLINRFFVSRLAITTLS) the chain is on the cytoplasmic side. A helical membrane pass occupies residues 217–237 (VSVILTFVNASPVLLMEVMGF). At 238–246 (SRGDYAITM) the chain is on the periplasmic side. A helical membrane pass occupies residues 247 to 267 (ALTAGVSMVVSFSTPFALGLF). The Cytoplasmic segment spans residues 268 to 270 (KPR). A helical transmembrane segment spans residues 271 to 291 (TLMLVSQGLFLTAGVTLSLAH). The Periplasmic segment spans residues 292-294 (TNT). Residues 295–315 (VTLFGLTLICAGFSVGFGVAM) form a helical membrane-spanning segment. The Cytoplasmic portion of the chain corresponds to 316 to 327 (SQALGPFSLRAG). A helical transmembrane segment spans residues 328–350 (VASSTLGIAQVCGSSLWIWLAAI). Over 351-354 (LGIS) the chain is Periplasmic. A helical membrane pass occupies residues 355-377 (AMNMLIGILIGCSIVSILLIFSV). At 378–395 (TPNRSVAEHEEIPYQSRP) the chain is on the cytoplasmic side.

This sequence belongs to the major facilitator superfamily. DHA1 family. MdtL (TC 2.A.1.2.22) subfamily.

Its subcellular location is the cell inner membrane. The polypeptide is Multidrug resistance protein MdtL (mdtL) (Salmonella typhimurium (strain LT2 / SGSC1412 / ATCC 700720)).